We begin with the raw amino-acid sequence, 821 residues long: Cation/H(+) antiporter 15 (821 aa).

A run of 13 helical transmembrane segments spans residues 37–57, 65–82, 97–117, 131–151, 166–186, 200–220, 228–248, 268–288, 292–312, 318–338, 350–370, 378–398, and 410–430; these read LPLFVLQLTLVVVVTRFFVFI, RVISEILGGIVLGPSVLG, VMVLETMANVGLLYFLFLVGV, ALTIAIGGMVLPFLIGAAFSF, ILFLGVALSVTAFPVLARILA, MSAALVNDMFAWILLALAIAL, FASLWVMISSAVFIAVCVFVV, FHICLILTGVMISGFITDAIG, VFGAFVFGLVIPNGPLGLTLI, FVSGLLLPLFFAISGLKTNIA, FLVIFLACAGKVIGTVIVAFF, GITLGLLLNTKGLVEMIVLNV, and FATMVLVALVMTGVITPIVTI. The disordered stretch occupies residues 800–821; it reads DFPESPVHSHETKVTYGLENPR.

The protein belongs to the monovalent cation:proton antiporter 2 (CPA2) transporter (TC 2.A.37) family. CHX (TC 2.A.37.4) subfamily. As to expression, specifically expressed in pollen.

It is found in the membrane. Functionally, may operate as a cation/H(+) antiporter. This chain is Cation/H(+) antiporter 15 (CHX15), found in Arabidopsis thaliana (Mouse-ear cress).